A 1174-amino-acid polypeptide reads, in one-letter code: Ankyrin repeat and LEM domain-containing protein 2 homolog (1174 aa).

4 stretches are compositionally biased toward low complexity: residues Asn37–Ser56, Ser150–Thr164, Leu174–Asn198, and Gln205–Pro219. 2 disordered regions span residues Asn37–Pro74 and Pro141–Ala230. The ANK repeat unit spans residues Arg338–Leu367. 2 disordered regions span residues Ala519–Asn543 and Gly961–Ile981. The span at Ala521–Pro532 shows a compositional bias: polar residues. Residues Asn533–Asn543 are compositionally biased toward low complexity.

This sequence belongs to the ANKLE2 family.

The protein localises to the endoplasmic reticulum. It is found in the nucleus envelope. Its subcellular location is the cytoplasm. Involved in brain development probably by regulating asymmetric division of neuroblasts. Regulates neuroblast asymmetric cell division by controlling asymmetric protein localization of Mira, Baz, Par-6 and aPKC, and spindle alignment. Also, regulates the localization of kinase Ball during mitosis, specifically maintaining Ball in the nucleus during interphase. Required for proper ER and nuclear envelope morphology in neuroblasts. This Drosophila melanogaster (Fruit fly) protein is Ankyrin repeat and LEM domain-containing protein 2 homolog.